We begin with the raw amino-acid sequence, 366 residues long: Chorismate synthase (366 aa).

Arg48 provides a ligand contact to NADP(+). Residues 125–127, Gly285, 300–304, and Arg327 contribute to the FMN site; these read RSS and KPTPS.

Belongs to the chorismate synthase family. It depends on FMNH2 as a cofactor.

The enzyme catalyses 5-O-(1-carboxyvinyl)-3-phosphoshikimate = chorismate + phosphate. It functions in the pathway metabolic intermediate biosynthesis; chorismate biosynthesis; chorismate from D-erythrose 4-phosphate and phosphoenolpyruvate: step 7/7. Functionally, catalyzes the anti-1,4-elimination of the C-3 phosphate and the C-6 proR hydrogen from 5-enolpyruvylshikimate-3-phosphate (EPSP) to yield chorismate, which is the branch point compound that serves as the starting substrate for the three terminal pathways of aromatic amino acid biosynthesis. This reaction introduces a second double bond into the aromatic ring system. The protein is Chorismate synthase of Methanococcoides burtonii (strain DSM 6242 / NBRC 107633 / OCM 468 / ACE-M).